We begin with the raw amino-acid sequence, 70 residues long: MNQRKEIELLMFDVLPYMANMEFIKELLESVNSLEELEQKVRELLEKETDITKKTDLKILLEKIEERKNK.

This is an uncharacterized protein from Methanocaldococcus jannaschii (strain ATCC 43067 / DSM 2661 / JAL-1 / JCM 10045 / NBRC 100440) (Methanococcus jannaschii).